Consider the following 231-residue polypeptide: Ion-translocating oxidoreductase complex subunit E (231 aa).

The next 7 membrane-spanning stretches (helical) occupy residues 18–38, 39–59, 69–89, 93–113, 127–147, 157–177, and 182–202; these read GLVQ…ITNA, LGLG…VSLV, IPVF…LINA, NLYL…VIIG, SAFD…VLGA, LFGG…IHVW, and PFLL…LIAL.

Belongs to the NqrDE/RnfAE family. The complex is composed of six subunits: RnfA, RnfB, RnfC, RnfD, RnfE and RnfG.

The protein localises to the cell inner membrane. In terms of biological role, part of a membrane-bound complex that couples electron transfer with translocation of ions across the membrane. This chain is Ion-translocating oxidoreductase complex subunit E, found in Shewanella frigidimarina (strain NCIMB 400).